The chain runs to 248 residues: Pyridoxine 5'-phosphate synthase (248 aa).

N12 serves as a coordination point for 3-amino-2-oxopropyl phosphate. Residue 14-15 (DH) coordinates 1-deoxy-D-xylulose 5-phosphate. R23 provides a ligand contact to 3-amino-2-oxopropyl phosphate. The active-site Proton acceptor is the H48. Residues R50 and H55 each coordinate 1-deoxy-D-xylulose 5-phosphate. The Proton acceptor role is filled by E75. A 1-deoxy-D-xylulose 5-phosphate-binding site is contributed by T105. Residue H196 is the Proton donor of the active site. 3-amino-2-oxopropyl phosphate is bound by residues G197 and 218-219 (GH).

It belongs to the PNP synthase family. In terms of assembly, homooctamer; tetramer of dimers.

Its subcellular location is the cytoplasm. The catalysed reaction is 3-amino-2-oxopropyl phosphate + 1-deoxy-D-xylulose 5-phosphate = pyridoxine 5'-phosphate + phosphate + 2 H2O + H(+). The protein operates within cofactor biosynthesis; pyridoxine 5'-phosphate biosynthesis; pyridoxine 5'-phosphate from D-erythrose 4-phosphate: step 5/5. In terms of biological role, catalyzes the complicated ring closure reaction between the two acyclic compounds 1-deoxy-D-xylulose-5-phosphate (DXP) and 3-amino-2-oxopropyl phosphate (1-amino-acetone-3-phosphate or AAP) to form pyridoxine 5'-phosphate (PNP) and inorganic phosphate. This is Pyridoxine 5'-phosphate synthase from Pseudomonas fluorescens (strain ATCC BAA-477 / NRRL B-23932 / Pf-5).